The chain runs to 369 residues: tRNA 2-selenouridine synthase (369 aa).

In terms of domain architecture, Rhodanese spans 12–136; sequence FLEDTPLMDV…LRNFLFETTR (125 aa). The S-selanylcysteine intermediate role is filled by Cys95.

Belongs to the SelU family. In terms of assembly, monomer.

It carries out the reaction 5-methylaminomethyl-2-thiouridine(34) in tRNA + selenophosphate + (2E)-geranyl diphosphate + H2O + H(+) = 5-methylaminomethyl-2-selenouridine(34) in tRNA + (2E)-thiogeraniol + phosphate + diphosphate. The catalysed reaction is 5-methylaminomethyl-2-thiouridine(34) in tRNA + (2E)-geranyl diphosphate = 5-methylaminomethyl-S-(2E)-geranyl-thiouridine(34) in tRNA + diphosphate. It catalyses the reaction 5-methylaminomethyl-S-(2E)-geranyl-thiouridine(34) in tRNA + selenophosphate + H(+) = 5-methylaminomethyl-2-(Se-phospho)selenouridine(34) in tRNA + (2E)-thiogeraniol. The enzyme catalyses 5-methylaminomethyl-2-(Se-phospho)selenouridine(34) in tRNA + H2O = 5-methylaminomethyl-2-selenouridine(34) in tRNA + phosphate. Functionally, involved in the post-transcriptional modification of the uridine at the wobble position (U34) of tRNA(Lys), tRNA(Glu) and tRNA(Gln). Catalyzes the conversion of 2-thiouridine (S2U-RNA) to 2-selenouridine (Se2U-RNA). Acts in a two-step process involving geranylation of 2-thiouridine (S2U) to S-geranyl-2-thiouridine (geS2U) and subsequent selenation of the latter derivative to 2-selenouridine (Se2U) in the tRNA chain. This Pseudomonas paraeruginosa (strain DSM 24068 / PA7) (Pseudomonas aeruginosa (strain PA7)) protein is tRNA 2-selenouridine synthase.